The chain runs to 500 residues: L-aspartate semialdehyde sulfurtransferase (500 aa).

The active-site Cysteine persulfide intermediate is the C131. CBS domains are found at residues 384-441 and 446-500; these read MADF…IFDS and MTKK…ARRY.

This sequence belongs to the L-aspartate semialdehyde sulfurtransferase family. As to quaternary structure, forms homodimers. May form a complex with MA_1822.

It carries out the reaction L-aspartate 4-semialdehyde + reduced 2[4Fe-4S]-[ferredoxin] + hydrogen sulfide + 3 H(+) = oxidized 2[4Fe-4S]-[ferredoxin] + L-homocysteine + H2O. It participates in amino-acid biosynthesis. Functionally, required for O-acetylhomoserine sulfhydrylase (OAHS)-independent homocysteine (Hcy) biosynthesis. Together with MA_1822, catalyzes the condensation of sulfide with aspartate semialdehyde to generate homocysteine. Likely functions through persulfide intermediate. This chain is L-aspartate semialdehyde sulfurtransferase, found in Methanosarcina acetivorans (strain ATCC 35395 / DSM 2834 / JCM 12185 / C2A).